Consider the following 401-residue polypeptide: Imidazolonepropionase (401 aa).

Residues His70 and His72 each coordinate Fe(3+). Residues His70 and His72 each contribute to the Zn(2+) site. Residues Arg79, Tyr142, and His175 each contribute to the 4-imidazolone-5-propanoate site. Tyr142 contributes to the N-formimidoyl-L-glutamate binding site. His238 is a Fe(3+) binding site. Position 238 (His238) interacts with Zn(2+). Position 241 (Gln241) interacts with 4-imidazolone-5-propanoate. Asp313 is a binding site for Fe(3+). Asp313 is a Zn(2+) binding site. 2 residues coordinate N-formimidoyl-L-glutamate: Asn315 and Gly317. Thr318 is a 4-imidazolone-5-propanoate binding site.

Belongs to the metallo-dependent hydrolases superfamily. HutI family. It depends on Zn(2+) as a cofactor. Requires Fe(3+) as cofactor.

It localises to the cytoplasm. It catalyses the reaction 4-imidazolone-5-propanoate + H2O = N-formimidoyl-L-glutamate. It participates in amino-acid degradation; L-histidine degradation into L-glutamate; N-formimidoyl-L-glutamate from L-histidine: step 3/3. Functionally, catalyzes the hydrolytic cleavage of the carbon-nitrogen bond in imidazolone-5-propanoate to yield N-formimidoyl-L-glutamate. It is the third step in the universal histidine degradation pathway. This Xanthomonas axonopodis pv. citri (strain 306) protein is Imidazolonepropionase.